Consider the following 225-residue polypeptide: Ribonuclease T (225 aa).

The segment at 1-21 (MSEDHFDDEHEGHGGGGGSRH) is disordered. The region spanning 33–207 (VVVDVETGGF…YDTEKTAELF (175 aa)) is the Exonuclease domain. Residues aspartate 36, glutamate 38, histidine 194, and aspartate 199 each contribute to the Mg(2+) site. Histidine 194 functions as the Proton donor/acceptor in the catalytic mechanism.

This sequence belongs to the RNase T family. Homodimer. Mg(2+) serves as cofactor.

In terms of biological role, trims short 3' overhangs of a variety of RNA species, leaving a one or two nucleotide 3' overhang. Responsible for the end-turnover of tRNA: specifically removes the terminal AMP residue from uncharged tRNA (tRNA-C-C-A). Also appears to be involved in tRNA biosynthesis. The sequence is that of Ribonuclease T from Pseudomonas savastanoi pv. phaseolicola (strain 1448A / Race 6) (Pseudomonas syringae pv. phaseolicola (strain 1448A / Race 6)).